The primary structure comprises 432 residues: Probable anion transporter 5 (432 aa).

The first 23 residues, 1 to 23 (MKLSNIPQRYVIVFLTFLSTCVC), serve as a signal peptide directing secretion. Transmembrane regions (helical) follow at residues 50–70 (TILS…GWAA), 78–98 (VLLL…LDPN), 101–121 (GLLV…FPSI), 140–160 (ITTS…PALV), 164–184 (GPES…LLWI), 229–249 (LPVW…YVLM), 273–293 (VPYL…DYLI), 305–325 (KFLN…LPMF), 331–351 (VILC…GFAV), 360–380 (YAGI…IIGV), and 405–425 (VVFF…LLFS).

The protein belongs to the major facilitator superfamily. Sodium/anion cotransporter (TC 2.A.1.14) family. As to expression, ubiquitous.

The protein resides in the golgi apparatus membrane. Inorganic phosphate and probable anion transporter. The polypeptide is Probable anion transporter 5 (ANTR5) (Arabidopsis thaliana (Mouse-ear cress)).